A 313-amino-acid chain; its full sequence is Adhesin MafA 1 (313 aa).

The N-terminal stretch at 1–14 (MKILLLLIPLVLTA) is a signal peptide. Cys15 carries N-palmitoyl cysteine lipidation. The S-diacylglycerol cysteine moiety is linked to residue Cys15. The span at 282-298 (GDTTAQNRPDFKQNNGK) shows a compositional bias: polar residues. The disordered stretch occupies residues 282–313 (GDTTAQNRPDFKQNNGKNPDVGNEVIRRRKGG).

Belongs to the MafA family.

It is found in the cell outer membrane. The polypeptide is Adhesin MafA 1 (mafA1) (Neisseria meningitidis serogroup C / serotype 2a (strain ATCC 700532 / DSM 15464 / FAM18)).